A 270-amino-acid chain; its full sequence is MTLKIAIAGAGGRMGCQLIQAVHSAEGVELGAAFERKGSSLVGTDAGELAGIGHLGVAVSDDLESQKDKFDLLIDFTRPEGTLEHIAFCVANNKKMVIGTTGFDENGKVAIKAASDKIAIVFASNFSVGVNLVFKLLEKAAKVMGDYCDIEVIEAHHRHKVDAPSGTALSMGEHIAKTLGRDLKTHGVFCREGITGERKRDEIGFSTIRASDVVGEHSVWFADIGERVEISHKASSRMTFANGAVRAGKWLENKANGLFDMTDVLDLNNL.

NAD(+) contacts are provided by residues 9-14 (GAGGRM) and glutamate 35. Arginine 36 is a binding site for NADP(+). Residues 99–101 (GTT) and 123–126 (ASNF) contribute to the NAD(+) site. Catalysis depends on histidine 156, which acts as the Proton donor/acceptor. Histidine 157 is a (S)-2,3,4,5-tetrahydrodipicolinate binding site. The active-site Proton donor is lysine 160. 166-167 (GT) serves as a coordination point for (S)-2,3,4,5-tetrahydrodipicolinate.

It belongs to the DapB family.

The protein localises to the cytoplasm. It carries out the reaction (S)-2,3,4,5-tetrahydrodipicolinate + NAD(+) + H2O = (2S,4S)-4-hydroxy-2,3,4,5-tetrahydrodipicolinate + NADH + H(+). The enzyme catalyses (S)-2,3,4,5-tetrahydrodipicolinate + NADP(+) + H2O = (2S,4S)-4-hydroxy-2,3,4,5-tetrahydrodipicolinate + NADPH + H(+). The protein operates within amino-acid biosynthesis; L-lysine biosynthesis via DAP pathway; (S)-tetrahydrodipicolinate from L-aspartate: step 4/4. Catalyzes the conversion of 4-hydroxy-tetrahydrodipicolinate (HTPA) to tetrahydrodipicolinate. The polypeptide is 4-hydroxy-tetrahydrodipicolinate reductase (Haemophilus influenzae (strain ATCC 51907 / DSM 11121 / KW20 / Rd)).